The sequence spans 1596 residues: Transcription factor Zelda (1596 aa).

3 disordered regions span residues 1-143 (MTSI…QQQQ), 209-273 (SGLG…GGAA), and 490-530 (TSPA…SVLP). A compositionally biased stretch (low complexity) spans 13-24 (AAEALASSSATD). Over residues 25–53 (SGGGGAGGGGGGGGGGSGGPGAGGTGGVG) the composition is skewed to gly residues. Residues 60 to 72 (NATISAAADSSDN) show a composition bias toward polar residues. 2 stretches are compositionally biased toward low complexity: residues 73 to 123 (QPGT…ITHQ) and 226 to 267 (SAPS…QTPG). Gly residues predominate over residues 501 to 518 (GGPGQEGAAGAAPGGGYR). The C2H2-type 1 zinc-finger motif lies at 552-576 (YNCTACNKWFTSSGHLKRHYNTTLH). Disordered regions lie at residues 578-813 (NAVK…TTTA), 825-945 (EDSN…MGML), 1017-1074 (GEQH…MPLT), and 1252-1322 (QMQH…TTLP). The span at 610–634 (RGNAAAAAAAAAAAASASGQGQQQQ) shows a compositional bias: low complexity. Residues 635–653 (PPIPPPPANVPPPEPPRSP) are compositionally biased toward pro residues. Residues 656–668 (YGGGGGLGVGAMG) are compositionally biased toward gly residues. A compositionally biased stretch (polar residues) spans 673–682 (SQYSASPSPT). Low complexity-rich tracts occupy residues 683–709 (QQQQHHLNHHQQQANGYANGTANGYGY) and 719–753 (NASPQHASNNNSNNQQQQQQQQQHHQQQMPQHHNS). Polar residues predominate over residues 768 to 781 (PHNNNTTQMPSSQM). The span at 796-813 (TTTRAPQITTTATTTTTA) shows a compositional bias: low complexity. Positions 830-840 (THTHTHTHPNH) are enriched in basic residues. The span at 849–858 (SSSSSSSMAT) shows a compositional bias: low complexity. Residues 864–877 (QELRDQEQADDHLH) show a composition bias toward basic and acidic residues. Low complexity predominate over residues 879–916 (HQQASQQYLLSARHYHSSTPNTLSSSNTNPSTPSSNSP). A transactivation activation domain (TAD) region spans residues 904 to 1297 (SNTNPSTPSS…PLAKKRRGGN (394 aa)). Positions 921 to 932 (RQEQQGTDFSRT) are enriched in polar residues. Over residues 933–944 (TPPPQPLPPMGM) the composition is skewed to pro residues. Residues 1019–1036 (QHQRQEADHHQQQRELHQ) show a composition bias toward basic and acidic residues. 2 stretches are compositionally biased toward low complexity: residues 1037-1062 (LDQQQQQQQALILADSLPHSSSSPTS) and 1252-1275 (QMQHQQLDQMQQHQQQLDHQQQQQ). Composition is skewed to polar residues over residues 1276-1286 (ILADQTQTMAQ) and 1309-1322 (SSVGSTSPHSTTLP). The C2H2-type 2 zinc-finger motif lies at 1326-1349 (IKCLECDKEFTKNCYLTQHNKSFH). The C2H2-type 3; degenerate zinc-finger motif lies at 1355-1378 (FRCQKCGKRFQSEDVYTTHLGRHR). C2H2-type zinc fingers lie at residues 1384 to 1407 (HKCELCPKQFHHKTDLRRHVEAIH) and 1413 to 1435 (HMCDICEKGFCRKDHLRKHLETH).

Zygotically expressed in the developing embryonic germ layers, nervous system, imaginal disk primordia and in larval wing and eye disks. As to expression, detected in the germline cells of the ovary, in unfertilized eggs and throughout early development. Later, it becomes mostly restricted to the nervous system and specific head regions. Also expressed in imaginal wing disks in third instar larvae.

The protein resides in the nucleus. It is found in the chromosome. In terms of biological role, transcription factor required for zygotic genome activation (ZGA), a critical event in early embryonic development during which the developmental control passes from maternally provided mRNAs to the expression of the zygotic genome after fertilization. Binds to regulatory DNA sequences containing a 5'-CAGGTAG-3' sequence motif, which are highly enriched among developmental enhancers. Within 1 hour into development, or by the embryo's 8th nuclear cycle, binds the majority of its motifs genome-wide. Zelda-binding promotes nucleosome depletion and chromatin accessibility, thereby facilitating the binding of patterning transcription factors, including the binding of the dorsoventral patterning transcription factors dorsal (dl) and twist (twi), and the anteroposterior patterning transcription factors bicoid (bcd) and caudal (cad). Promotes the activity of patterning transcription factors, such as bcd and dl, by lowering the concentration threshold required for transcriptional activation. Required both for the earliest (minor) and major waves of transcription during ZGA. Also involved in maternal mRNA clearance during the maternal-to-zygote transition by promoting expression of microRNAs (miRNAs), such as miR-1, miR-9a and miR-309, which mediate degradation of maternally-loaded RNAs. Also involved in post-blastoderm development: nvolved in nervous system development by maintaining neuroblasts in an undifferentiated state and equired for wing disk development. Constitutes the main isoform expressed throughout development. Transcription factor required for zygotic genome activation (ZGA). Functionally, acts as a dominant negative inhibitor of transcription factor activity of isoform A. The protein is Transcription factor Zelda of Drosophila melanogaster (Fruit fly).